The following is a 793-amino-acid chain: Putative dipeptidyl aminopeptidase C2E11.08 (793 aa).

The Cytoplasmic portion of the chain corresponds to 1-24 (MNDFSFEDKGLISRSGFGSRHVRR). Residues 25–45 (VVKALALIFSLLILYLTISNV) form a helical; Signal-anchor for type II membrane protein membrane-spanning segment. Topologically, residues 46-793 (SDSPPKRDSL…STGVRQHRWD (748 aa)) are lumenal. N-linked (GlcNAc...) asparagine glycosylation is found at Asn101, Asn136, Asn246, Asn299, Asn303, Asn324, Asn336, Asn377, Asn384, Asn407, and Asn535. Active-site charge relay system residues include Ser647, Asp722, and His755. The N-linked (GlcNAc...) asparagine glycan is linked to Asn761.

This sequence belongs to the peptidase S9B family.

Its subcellular location is the vacuole membrane. The sequence is that of Putative dipeptidyl aminopeptidase C2E11.08 from Schizosaccharomyces pombe (strain 972 / ATCC 24843) (Fission yeast).